The primary structure comprises 991 residues: Polyribonucleotide nucleotidyltransferase 2, mitochondrial (991 aa).

Residues 1 to 39 constitute a mitochondrion transit peptide; sequence MSSIVNRASSASLPNFLAWRALGFRTICSGRLGFAPSVP. The region spanning 609–667 is the KH domain; the sequence is PRLATLKYSNDSLRTLIGPMGVLKRKIEVETGARLSIDNGTLTIVAKNQDVMEKAQEQV. Residues 678-746 form the S1 motif 1 domain; the sequence is GGVYKGTVSS…VRGNIKLSRK (69 aa). Positions 813–865 are disordered; the sequence is EAEKSSPVNDNDKPRRAATSKPDRKPKSTASKLIATQKEEEALESIAPEETSA. The span at 822 to 838 shows a compositional bias: basic and acidic residues; that stretch reads DNDKPRRAATSKPDRKP. The region spanning 925-987 is the S1 motif 2 domain; it reads GTEMTATVDH…GVPVMALVDE (63 aa).

Belongs to the polyribonucleotide nucleotidyltransferase family.

It is found in the mitochondrion. It carries out the reaction RNA(n+1) + phosphate = RNA(n) + a ribonucleoside 5'-diphosphate. Involved in the 3'-end maturation of mitochondrial mRNAs, rRNAs and tRNAs. Functions as a poly(A) mRNA 3'-5' degrading phosphorylase and is required for the degradation of highly expressed transcripts of non-coding regions. In Arabidopsis thaliana (Mouse-ear cress), this protein is Polyribonucleotide nucleotidyltransferase 2, mitochondrial (PNP2).